The sequence spans 469 residues: Cyclin-dependent kinase 14 (469 aa).

Residues S24, S78, and S95 each carry the phosphoserine modification. The interval 103–133 (FKTSSTGKESPKVRRHSSPSSPTSPKFGKAD) is disordered. S134 bears the Phosphoserine mark. The 285-residue stretch at 135–419 (YEKLEKLGEG…AQAALSHEYF (285 aa)) folds into the Protein kinase domain. ATP-binding positions include 141–149 (LGEGSYATV) and K164. The Proton acceptor role is filled by D256. Residues 449–469 (ESMRAFGKNNSYGKSLSNSKH) form a disordered region. The span at 456 to 469 (KNNSYGKSLSNSKH) shows a compositional bias: polar residues.

This sequence belongs to the protein kinase superfamily. CMGC Ser/Thr protein kinase family. CDC2/CDKX subfamily. Found in a complex with LRP6, CCNY and CAPRIN2 during G2/M stage; CAPRIN2 functions as a scaffold for the complex by binding to CCNY via its N terminus and to CDK14 via its C terminus. Interacts with CCNY; CCNY mediates its recruitment to the plasma membrane and promotes phosphorylation of LRP6. Interacts with CCDN3 and CDKN1A. Interacts with SEPT8. Interacts with 14-3-3 proteina YWHAB, YWHAE, YWHAH and YWHAQ. Highly expressed in brain, pancreas, kidney, heart, testis and ovary. Also detected at lower levels in other tissues except in spleen and thymus where expression is barely detected.

The protein localises to the cell membrane. Its subcellular location is the cytoplasm. The protein resides in the nucleus. The catalysed reaction is L-seryl-[protein] + ATP = O-phospho-L-seryl-[protein] + ADP + H(+). It carries out the reaction L-threonyl-[protein] + ATP = O-phospho-L-threonyl-[protein] + ADP + H(+). Its activity is regulated as follows. Serine/threonine-protein kinase activity is promoted by associated cyclins CCDN3 and CCNY and repressed by CDKN1A. Serine/threonine-protein kinase involved in the control of the eukaryotic cell cycle, whose activity is controlled by an associated cyclin. Acts as a cell-cycle regulator of Wnt signaling pathway during G2/M phase by mediating the phosphorylation of LRP6 at 'Ser-1490', leading to the activation of the Wnt signaling pathway. Acts as a regulator of cell cycle progression and cell proliferation via its interaction with CCDN3. Phosphorylates RB1 in vitro, however the relevance of such result remains to be confirmed in vivo. May also play a role in meiosis, neuron differentiation and may indirectly act as a negative regulator of insulin-responsive glucose transport. This is Cyclin-dependent kinase 14 (CDK14) from Homo sapiens (Human).